The chain runs to 337 residues: UPF0284 protein AF_0276 (337 aa).

This sequence belongs to the UPF0284 family.

This chain is UPF0284 protein AF_0276, found in Archaeoglobus fulgidus (strain ATCC 49558 / DSM 4304 / JCM 9628 / NBRC 100126 / VC-16).